The following is an 837-amino-acid chain: Zinc fingers and homeoboxes protein 2 (837 aa).

Residues 1-41 (MASKRKSTTPCMVRTSQVVEQDVPEEVDRAKEKGIGTPQPD) are disordered. Positions 27-77 (VDRAKEKGIGTPQPDVAKDCWAAELENSSKENEVIEVKSMGESQSKKLQGG) are interaction with EFNB1. Threonine 37 carries the phosphothreonine modification. Lysine 64 participates in a covalent cross-link: Glycyl lysine isopeptide (Lys-Gly) (interchain with G-Cter in SUMO2). 2 consecutive C2H2-type zinc fingers follow at residues 78–101 (YECK…DMQH) and 110–133 (YVCA…SKFH). Low complexity predominate over residues 167–180 (TSGPGTGDSDSGIS). The disordered stretch occupies residues 167-203 (TSGPGTGDSDSGISVSKTPIMKPGKPKADAKKVPKKP). Basic and acidic residues predominate over residues 192-203 (PKADAKKVPKKP). The tract at residues 195–358 (DAKKVPKKPE…PAQLAPTKVT (164 aa)) is required for homodimerization. DNA-binding regions (homeobox) lie at residues 263-324 (NTTK…WSPE), 439-501 (TPAS…IVHI), 530-591 (PQKF…EQAV), and 628-690 (SPSP…TVKW). The required for repressor activity stretch occupies residues 263–446 (NTTKYNSALD…PLTPASDRKK (184 aa)). The segment at 263–497 (NTTKYNSALD…SDHRYRCQRG (235 aa)) is required for interaction with NFYA. The interval 317–446 (HGISWSPEEV…PLTPASDRKK (130 aa)) is required for nuclear localization. Residues 404 to 445 (GQKRPLVTPQAAPEPKRPHIAQVPEPPPKVANPPLTPASDRK) are disordered. Residues 427 to 439 (PEPPPKVANPPLT) show a composition bias toward pro residues. A Glycyl lysine isopeptide (Lys-Gly) (interchain with G-Cter in SUMO2) cross-link involves residue lysine 455. Residues 754–837 (EPAKDCLPAK…DCVPAEAGQA (84 aa)) form a disordered region. Phosphoserine is present on residues serine 825 and serine 827.

This sequence belongs to the ZHX family. In terms of assembly, homodimer (via homeobox domain 1). Heterodimer with ZHX1 (via homeobox domain 1). Heterodimer with ZHX3 (via homeobox domain 1). Heterodimerization with ZHX1 is not necessary for repressor activity. Interacts (via homeobox domain) with NFYA (via N-terminus). Interacts with EFNB1 intracellular domain peptide; the interaction enhances ZHX2 transcriptional repression activity.

It localises to the nucleus. Acts as a transcriptional repressor. Represses the promoter activity of the CDC25C gene stimulated by NFYA. May play a role in retinal development where it regulates the composition of bipolar cell populations, by promoting differentiation of bipolar OFF-type cells. In the brain, may promote maintenance and suppress differentiation of neural progenitor cells in the developing cortex. This chain is Zinc fingers and homeoboxes protein 2 (ZHX2), found in Pongo abelii (Sumatran orangutan).